A 276-amino-acid chain; its full sequence is Small ribosomal subunit protein uS2 (276 aa).

The protein belongs to the universal ribosomal protein uS2 family.

The sequence is that of Small ribosomal subunit protein uS2 from Chlamydia abortus (strain DSM 27085 / S26/3) (Chlamydophila abortus).